A 596-amino-acid chain; its full sequence is Elongation factor 4 (596 aa).

In terms of domain architecture, tr-type G spans 2–184; the sequence is KNIRNFSIIA…TIVKNIPSPA (183 aa). Residues 14–19 and 131–134 each bind GTP; these read DHGKST and NKID.

The protein belongs to the TRAFAC class translation factor GTPase superfamily. Classic translation factor GTPase family. LepA subfamily.

It localises to the cell inner membrane. The catalysed reaction is GTP + H2O = GDP + phosphate + H(+). In terms of biological role, required for accurate and efficient protein synthesis under certain stress conditions. May act as a fidelity factor of the translation reaction, by catalyzing a one-codon backward translocation of tRNAs on improperly translocated ribosomes. Back-translocation proceeds from a post-translocation (POST) complex to a pre-translocation (PRE) complex, thus giving elongation factor G a second chance to translocate the tRNAs correctly. Binds to ribosomes in a GTP-dependent manner. The sequence is that of Elongation factor 4 from Colwellia psychrerythraea (strain 34H / ATCC BAA-681) (Vibrio psychroerythus).